The following is a 285-amino-acid chain: Bifunctional protein FolD (285 aa).

NADP(+)-binding positions include 163 to 165, serine 188, and alanine 231; that span reads GRS.

The protein belongs to the tetrahydrofolate dehydrogenase/cyclohydrolase family. As to quaternary structure, homodimer.

The enzyme catalyses (6R)-5,10-methylene-5,6,7,8-tetrahydrofolate + NADP(+) = (6R)-5,10-methenyltetrahydrofolate + NADPH. It catalyses the reaction (6R)-5,10-methenyltetrahydrofolate + H2O = (6R)-10-formyltetrahydrofolate + H(+). It participates in one-carbon metabolism; tetrahydrofolate interconversion. Its function is as follows. Catalyzes the oxidation of 5,10-methylenetetrahydrofolate to 5,10-methenyltetrahydrofolate and then the hydrolysis of 5,10-methenyltetrahydrofolate to 10-formyltetrahydrofolate. In Oenococcus oeni (strain ATCC BAA-331 / PSU-1), this protein is Bifunctional protein FolD.